Here is a 546-residue protein sequence, read N- to C-terminus: Chaperonin GroEL (546 aa).

ATP is bound by residues 30-33 (TLGP), lysine 51, 87-91 (DGTTT), glycine 415, 479-481 (NAA), and aspartate 495.

This sequence belongs to the chaperonin (HSP60) family. As to quaternary structure, forms a cylinder of 14 subunits composed of two heptameric rings stacked back-to-back. Interacts with the co-chaperonin GroES.

It localises to the cytoplasm. It carries out the reaction ATP + H2O + a folded polypeptide = ADP + phosphate + an unfolded polypeptide.. Its function is as follows. Together with its co-chaperonin GroES, plays an essential role in assisting protein folding. The GroEL-GroES system forms a nano-cage that allows encapsulation of the non-native substrate proteins and provides a physical environment optimized to promote and accelerate protein folding. This is Chaperonin GroEL from Allochromatium vinosum (Chromatium vinosum).